The chain runs to 671 residues: UvrABC system protein B (671 aa).

Residues 25–412 (EGIDAGLAHQ…AGRVVEQVVR (388 aa)) form the Helicase ATP-binding domain. 38-45 (GVTGSGKT) contacts ATP. The Beta-hairpin signature appears at 91–114 (YYDYYQPEAYVPSSDTFIEKDASI). Residues 429–595 (QVDDLLSEIH…GVFKDVADIM (167 aa)) form the Helicase C-terminal domain. A disordered region spans residues 600–624 (VPGSRSKKRKGMAKAAEENARYENE). Residues 614 to 624 (AAEENARYENE) are compositionally biased toward basic and acidic residues. One can recognise a UVR domain in the interval 632–667 (NKRIRQLEEKMYQLARDLEFEAAAQMRDEIGKLRER).

It belongs to the UvrB family. Forms a heterotetramer with UvrA during the search for lesions. Interacts with UvrC in an incision complex.

The protein resides in the cytoplasm. The UvrABC repair system catalyzes the recognition and processing of DNA lesions. A damage recognition complex composed of 2 UvrA and 2 UvrB subunits scans DNA for abnormalities. Upon binding of the UvrA(2)B(2) complex to a putative damaged site, the DNA wraps around one UvrB monomer. DNA wrap is dependent on ATP binding by UvrB and probably causes local melting of the DNA helix, facilitating insertion of UvrB beta-hairpin between the DNA strands. Then UvrB probes one DNA strand for the presence of a lesion. If a lesion is found the UvrA subunits dissociate and the UvrB-DNA preincision complex is formed. This complex is subsequently bound by UvrC and the second UvrB is released. If no lesion is found, the DNA wraps around the other UvrB subunit that will check the other stand for damage. The protein is UvrABC system protein B of Pseudomonas savastanoi pv. phaseolicola (strain 1448A / Race 6) (Pseudomonas syringae pv. phaseolicola (strain 1448A / Race 6)).